A 65-amino-acid chain; its full sequence is uncharacterized protein (65 aa).

It is found in the plastid. Its subcellular location is the chloroplast. This is an uncharacterized protein from Porphyra purpurea (Red seaweed).